Consider the following 95-residue polypeptide: Large ribosomal subunit protein bL25 (95 aa).

It belongs to the bacterial ribosomal protein bL25 family. In terms of assembly, part of the 50S ribosomal subunit; part of the 5S rRNA/L5/L18/L25 subcomplex. Contacts the 5S rRNA. Binds to the 5S rRNA independently of L5 and L18.

In terms of biological role, this is one of the proteins that binds to the 5S RNA in the ribosome where it forms part of the central protuberance. The sequence is that of Large ribosomal subunit protein bL25 from Mannheimia succiniciproducens (strain KCTC 0769BP / MBEL55E).